The sequence spans 176 residues: Flavodoxin (176 aa).

Residues 4 to 165 (IGIFFGSDTG…RVEKWVKQVA (162 aa)) form the Flavodoxin-like domain.

This sequence belongs to the flavodoxin family. FMN serves as cofactor.

In terms of biological role, low-potential electron donor to a number of redox enzymes. This chain is Flavodoxin (fldA), found in Klebsiella pneumoniae.